The sequence spans 510 residues: D-alanine--D-alanyl carrier protein ligase (510 aa).

157 to 158 contributes to the ATP binding site; sequence TS. Aspartate 202 serves as a coordination point for D-alanine. 297 to 302 provides a ligand contact to ATP; the sequence is NTYGPT. Residue valine 306 participates in D-alanine binding. The ATP site is built by aspartate 389 and lysine 498. Lysine 498 is a D-alanine binding site.

Belongs to the ATP-dependent AMP-binding enzyme family. DltA subfamily.

Its subcellular location is the cytoplasm. The enzyme catalyses holo-[D-alanyl-carrier protein] + D-alanine + ATP = D-alanyl-[D-alanyl-carrier protein] + AMP + diphosphate. It functions in the pathway cell wall biogenesis; lipoteichoic acid biosynthesis. In terms of biological role, catalyzes the first step in the D-alanylation of lipoteichoic acid (LTA), the activation of D-alanine and its transfer onto the D-alanyl carrier protein (Dcp) DltC. In an ATP-dependent two-step reaction, forms a high energy D-alanyl-AMP intermediate, followed by transfer of the D-alanyl residue as a thiol ester to the phosphopantheinyl prosthetic group of the Dcp. D-alanylation of LTA plays an important role in modulating the properties of the cell wall in Gram-positive bacteria, influencing the net charge of the cell wall. This is D-alanine--D-alanyl carrier protein ligase from Listeria monocytogenes serotype 4b (strain F2365).